The chain runs to 208 residues: Ras-related protein Rab6 (208 aa).

A GTP-binding site is contributed by 19–27 (GEQSVGKTS). Positions 41–49 (YQATIGIDF) match the Effector region motif. GTP-binding positions include 67-71 (DTAGQ), 125-128 (NKTD), and 155-157 (SAK). A disordered region spans residues 176–208 (MDSTENKPSEDMQEVVLKDSPNETKDPEGGCAC). The span at 179–208 (TENKPSEDMQEVVLKDSPNETKDPEGGCAC) shows a compositional bias: basic and acidic residues.

The protein belongs to the small GTPase superfamily. Rab family. As to quaternary structure, interacts with Rich and Act5C. Interacts with BicD (via C-terminal domain). Interacts (in GTP-bound) with GCC1/CG10703 and cbs. Interacts with Gorab (via C-terminus); binds to a Gorab homodimer, this interaction seems to be required for trans-Golgi localization of Gorab. As to expression, expressed in larval eye, wing and leg imaginal disks and in salivary gland. Expressed in the larval optic lobe, showing an enrichment in the neuropil. In the adult brain, expressed in photoreceptors and mushroom body.

The protein resides in the golgi apparatus membrane. Its subcellular location is the synapse. The protein localises to the perikaryon. Its function is as follows. Protein transport. Regulator of membrane traffic from the Golgi apparatus towards the endoplasmic reticulum (ER). Mediates membrane trafficking during egg chamber growth and organization, possibly upstream of exocyst component Sec5. Also during oogenesis, plays a role, together with BicD but independently of Sec5, in the polarization of the oocyte microtubule cytoskeleton, in the localization of oskar mRNA and in the anterodorsal secretion of grk. Required for anterograde opsin transport through the ER-Golgi complex. Plays a role, together with Rich, in regulating CadN transport in photoreceptor cells which is required for the formation of normal synaptic connections between axons from the inner photoreceptor cells in the eye and postsynaptic cells in the brain medulla layer M6. Necessary for proper development of bristle shafts of macrochaete and microchaete on the head, thorax and scutellum. Modulates Notch signaling. As a key regulator of vesicular traffic, plays a critical role in the regulation of actin organization and is required for normal rates of phagocytic uptake during phagocytosis involved in defense against viral and fungal infection. The polypeptide is Ras-related protein Rab6 (Drosophila melanogaster (Fruit fly)).